A 259-amino-acid polypeptide reads, in one-letter code: Ribosomal RNA small subunit methyltransferase J (259 aa).

S-adenosyl-L-methionine contacts are provided by residues 101-102 (RD), 117-118 (ER), 153-154 (SS), and D176.

The protein belongs to the methyltransferase superfamily. RsmJ family.

Its subcellular location is the cytoplasm. It catalyses the reaction guanosine(1516) in 16S rRNA + S-adenosyl-L-methionine = N(2)-methylguanosine(1516) in 16S rRNA + S-adenosyl-L-homocysteine + H(+). Functionally, specifically methylates the guanosine in position 1516 of 16S rRNA. This Aliivibrio fischeri (strain ATCC 700601 / ES114) (Vibrio fischeri) protein is Ribosomal RNA small subunit methyltransferase J.